A 641-amino-acid chain; its full sequence is Phosphomethylpyrimidine synthase (641 aa).

Over residues 1-13 (MNIRSNPDTTRPA) the composition is skewed to polar residues. The interval 1 to 21 (MNIRSNPDTTRPAVTTGGLPS) is disordered. Substrate-binding positions include Asn-221, Met-250, Tyr-279, His-315, 335–337 (SRG), 376–379 (DGLR), and Glu-415. Position 419 (His-419) interacts with Zn(2+). Tyr-442 serves as a coordination point for substrate. His-483 provides a ligand contact to Zn(2+). The [4Fe-4S] cluster site is built by Cys-563, Cys-566, and Cys-571.

This sequence belongs to the ThiC family. Homodimer. [4Fe-4S] cluster is required as a cofactor.

It carries out the reaction 5-amino-1-(5-phospho-beta-D-ribosyl)imidazole + S-adenosyl-L-methionine = 4-amino-2-methyl-5-(phosphooxymethyl)pyrimidine + CO + 5'-deoxyadenosine + formate + L-methionine + 3 H(+). It functions in the pathway cofactor biosynthesis; thiamine diphosphate biosynthesis. Its function is as follows. Catalyzes the synthesis of the hydroxymethylpyrimidine phosphate (HMP-P) moiety of thiamine from aminoimidazole ribotide (AIR) in a radical S-adenosyl-L-methionine (SAM)-dependent reaction. This chain is Phosphomethylpyrimidine synthase, found in Rhodopseudomonas palustris (strain BisB5).